The chain runs to 387 residues: MQVFWFIPTHGDSRYLGTAEGARQVDHTYLQQVAVAADTLGYEGVLIPTGRSCEDPWVVAASLIPVTKRLRFLVAVRPGLMAPTLAARMAATYDRLSNGRLLVNLVTGGDPAELAGDGLFLDHAQRYEASEEFIRIWRETLAASHEGAALDYTGKHLSVKGAKVLYPPVQRPHPPVYFGGSSEAAHELAAEQVDSYLTWGEPPAAVAEKIADVRARAAKHGRTVRFGIRLHVIVRETEDEAWAAADKLISKLDDDTVARAQEAFRKMDSAGQQRMAALHANGVKRTRADLEISPNLWAGVGLVRGGAGTALVGDPQTVAARMKEYADLGIDTFVLSGYPHLEEAYRFAELVFPLLPRSVRDKLPGNVLNGPFGEVIATGIVPRVAAS.

This sequence belongs to the SsuD family.

It catalyses the reaction an alkanesulfonate + FMNH2 + O2 = an aldehyde + FMN + sulfite + H2O + 2 H(+). Functionally, catalyzes the desulfonation of aliphatic sulfonates. In Ralstonia pickettii (strain 12J), this protein is Alkanesulfonate monooxygenase.